Consider the following 557-residue polypeptide: MAAQGFLLIATFLLVLMVLARPLGSGLARLINDIPLPGTAGVERILFRLPGVSDHEMNWKQYLCAILGLNMLGLAVLFFMLLGQHYLPLNPQQLPGLSWDLALNTAVSFVTNTNWQSYSGETTLSYFSQMAGLTVQNFLSAASGIAVIFAFIRAFTRQSMSTLGNAWVDLLRITLWVLVPVALLIALFFIQQGALQNFLPYQAVNTVEGAQQLLPMGPVASQEAIKMLGTNGGGFFNANSSHPFENPTALTNFVQMLAIFLIPTALCFAFGEVTGDRRQGRMLLWAMSVIFVICVGVVMWAEVQGNPHLLALGADSSINMEGKESRFGVLVSSLFAVVTTAASCGAVIAMHDSFTALGGMVPMWLMQIGEVVFGGVGSGLYGMMLFVLLAVFIAGLMIGRTPEYLGKKIDVREMKLTALAILVTPTLVLMGAALAMMTDAGRSAMLNPGPHGFSEVLYAVSSAANNNGSAFAGLSANSPFWNCLLAFCMFVGRFGVIIPVMAIAGSLVSKKSQPASSGTLPTHGPLFVGLLIGTVLLVGALTFIPALALGPVAEYLS.

12 helical membrane-spanning segments follow: residues 5-25 (GFLLIATFLLVLMVLARPLGS), 63-83 (LCAILGLNMLGLAVLFFMLLG), 132-152 (GLTVQNFLSAASGIAVIFAFI), 170-190 (LLRITLWVLVPVALLIALFFI), 253-273 (FVQMLAIFLIPTALCFAFGEV), 283-303 (LLWAMSVIFVICVGVVMWAEV), 329-349 (VLVSSLFAVVTTAASCGAVIA), 356-376 (ALGGMVPMWLMQIGEVVFGGV), 379-399 (GLYGMMLFVLLAVFIAGLMIG), 416-436 (LTALAILVTPTLVLMGAALAM), 484-504 (LLAFCMFVGRFGVIIPVMAIA), and 526-546 (LFVGLLIGTVLLVGALTFIPA).

The protein belongs to the KdpA family. As to quaternary structure, the system is composed of three essential subunits: KdpA, KdpB and KdpC.

Its subcellular location is the cell inner membrane. Its function is as follows. Part of the high-affinity ATP-driven potassium transport (or Kdp) system, which catalyzes the hydrolysis of ATP coupled with the electrogenic transport of potassium into the cytoplasm. This subunit binds the periplasmic potassium ions and delivers the ions to the membrane domain of KdpB through an intramembrane tunnel. The polypeptide is Potassium-transporting ATPase potassium-binding subunit (Shigella boydii serotype 4 (strain Sb227)).